A 274-amino-acid polypeptide reads, in one-letter code: Large ribosomal subunit protein uL2 (274 aa).

2 disordered regions span residues 28–54 (APYA…TRHI) and 223–265 (VAMN…KRTD). Positions 39–48 (KSGGRNNNGR) are enriched in low complexity.

It belongs to the universal ribosomal protein uL2 family. Part of the 50S ribosomal subunit. Forms a bridge to the 30S subunit in the 70S ribosome.

Its function is as follows. One of the primary rRNA binding proteins. Required for association of the 30S and 50S subunits to form the 70S ribosome, for tRNA binding and peptide bond formation. It has been suggested to have peptidyltransferase activity; this is somewhat controversial. Makes several contacts with the 16S rRNA in the 70S ribosome. This Alteromonas mediterranea (strain DSM 17117 / CIP 110805 / LMG 28347 / Deep ecotype) protein is Large ribosomal subunit protein uL2.